The sequence spans 230 residues: Potassium/proton antiporter CemA (230 aa).

4 consecutive transmembrane segments (helical) span residues 7–27 (LPSF…SFSF), 106–126 (IILH…SFFL), 145–165 (LNDS…VGFH), and 181–201 (LGWA…PVIL).

It belongs to the CemA family.

Its subcellular location is the plastid. It is found in the chloroplast inner membrane. The catalysed reaction is K(+)(in) + H(+)(out) = K(+)(out) + H(+)(in). Contributes to K(+)/H(+) antiport activity by supporting proton efflux to control proton extrusion and homeostasis in chloroplasts in a light-dependent manner to modulate photosynthesis. Prevents excessive induction of non-photochemical quenching (NPQ) under continuous-light conditions. Indirectly promotes efficient inorganic carbon uptake into chloroplasts. The sequence is that of Potassium/proton antiporter CemA from Zea mays (Maize).